A 676-amino-acid polypeptide reads, in one-letter code: F420-dependent formate dehydrogenase 2 subunit alpha (676 aa).

Residues Phe4–Asp60 form the 4Fe-4S Mo/W bis-MGD-type domain. [4Fe-4S] cluster contacts are provided by Cys11, Cys14, Cys18, and Cys46. A non-standard amino acid (selenocysteine) is located at residue Sec133.

The protein belongs to the prokaryotic molybdopterin-containing oxidoreductase family. Dimer of an alpha (FdhA2) and a beta (FdhB2) subunit. [4Fe-4S] cluster is required as a cofactor. The cofactor is Mo-bis(molybdopterin guanine dinucleotide). Zn(2+) serves as cofactor.

The catalysed reaction is oxidized coenzyme F420-(gamma-L-Glu)(n) + formate + 2 H(+) = reduced coenzyme F420-(gamma-L-Glu)(n) + CO2. Functionally, catalyzes the oxidation of formate to carbon dioxide, with coenzyme F420 as the electron acceptor. In vitro can also use methyl viologen as electron acceptor. This Methanococcus maripaludis (strain DSM 14266 / JCM 13030 / NBRC 101832 / S2 / LL) protein is F420-dependent formate dehydrogenase 2 subunit alpha.